A 248-amino-acid polypeptide reads, in one-letter code: Triosephosphate isomerase (248 aa).

Residues N11 and K13 each coordinate substrate. The active-site Electrophile is the H95. E165 functions as the Proton acceptor in the catalytic mechanism.

The protein belongs to the triosephosphate isomerase family. Homodimer.

It is found in the cytoplasm. The catalysed reaction is dihydroxyacetone phosphate = methylglyoxal + phosphate. It carries out the reaction D-glyceraldehyde 3-phosphate = dihydroxyacetone phosphate. The protein operates within carbohydrate degradation; glycolysis; D-glyceraldehyde 3-phosphate from glycerone phosphate: step 1/1. It functions in the pathway carbohydrate biosynthesis; gluconeogenesis. Triosephosphate isomerase is an extremely efficient metabolic enzyme that catalyzes the interconversion between dihydroxyacetone phosphate (DHAP) and D-glyceraldehyde-3-phosphate (G3P) in glycolysis and gluconeogenesis. Its function is as follows. It is also responsible for the non-negligible production of methylglyoxal a reactive cytotoxic side-product that modifies and can alter proteins, DNA and lipids. The polypeptide is Triosephosphate isomerase (TPI1) (Gallus gallus (Chicken)).